The chain runs to 223 residues: Cytidylate kinase (223 aa).

10–18 (GPAGSGKSS) serves as a coordination point for ATP.

Belongs to the cytidylate kinase family. Type 1 subfamily.

Its subcellular location is the cytoplasm. The catalysed reaction is CMP + ATP = CDP + ADP. The enzyme catalyses dCMP + ATP = dCDP + ADP. This is Cytidylate kinase from Pseudothermotoga lettingae (strain ATCC BAA-301 / DSM 14385 / NBRC 107922 / TMO) (Thermotoga lettingae).